Here is a 545-residue protein sequence, read N- to C-terminus: 4-coumarate--CoA ligase 2 (545 aa).

ATP contacts are provided by Ser-192, Ser-193, Gly-194, Thr-195, Thr-196, and Lys-200. 2 residues coordinate (E)-4-coumaroyl-AMP: Tyr-242 and Ser-246. Position 263 (Lys-263) interacts with CoA. An SBD1 region spans residues 265-334 (DIAQFLELIP…AKFPNAKLGQ (70 aa)). (E)-4-coumaroyl-AMP-binding residues include Ala-312, Gln-334, Gly-335, Thr-339, and Met-347. Positions 334, 335, and 339 each coordinate ATP. Residues 335-402 (GYGMTEAGPV…IRGDQIMKGY (68 aa)) form an SBD2 region. ATP contacts are provided by Asp-423 and Arg-438. (E)-4-coumaroyl-AMP-binding residues include Lys-440 and Lys-444. Residues Lys-446 and Gly-447 each coordinate CoA. Lys-529 serves as a coordination point for ATP.

Belongs to the ATP-dependent AMP-binding enzyme family. Mg(2+) is required as a cofactor.

The catalysed reaction is (E)-4-coumarate + ATP + CoA = (E)-4-coumaroyl-CoA + AMP + diphosphate. The enzyme catalyses (E)-4-coumarate + ATP + H(+) = (E)-4-coumaroyl-AMP + diphosphate. It catalyses the reaction (E)-4-coumaroyl-AMP + CoA = (E)-4-coumaroyl-CoA + AMP + H(+). It participates in phytoalexin biosynthesis; 3,4',5-trihydroxystilbene biosynthesis; 3,4',5-trihydroxystilbene from trans-4-coumarate: step 1/2. In terms of biological role, carboxylate--CoA ligase that may use 4-coumarate as substrate. Follows a two-step reaction mechanism, wherein the carboxylate substrate first undergoes adenylation by ATP, followed by a thioesterification in the presence of CoA to yield the final CoA thioester. The protein is 4-coumarate--CoA ligase 2 (4CL2) of Solanum tuberosum (Potato).